Consider the following 95-residue polypeptide: Large ribosomal subunit protein bL27 (95 aa).

A propeptide spanning residues 1–9 (MLNMNLQFF) is cleaved from the precursor.

The protein belongs to the bacterial ribosomal protein bL27 family. Post-translationally, the N-terminus is cleaved by ribosomal processing cysteine protease Prp.

The polypeptide is Large ribosomal subunit protein bL27 (Agathobacter rectalis (strain ATCC 33656 / DSM 3377 / JCM 17463 / KCTC 5835 / VPI 0990) (Eubacterium rectale)).